A 245-amino-acid polypeptide reads, in one-letter code: Acetoacetate decarboxylase (245 aa).

The active-site Schiff-base intermediate with acetoacetate is the Lys-116.

Belongs to the ADC family.

The enzyme catalyses acetoacetate + H(+) = acetone + CO2. In terms of biological role, catalyzes the conversion of acetoacetate to acetone and carbon dioxide. This chain is Acetoacetate decarboxylase, found in Acidiphilium cryptum (strain JF-5).